Reading from the N-terminus, the 252-residue chain is Protein PF0476 (252 aa).

It belongs to the CinA family.

The protein is Protein PF0476 of Pyrococcus furiosus (strain ATCC 43587 / DSM 3638 / JCM 8422 / Vc1).